Here is a 205-residue protein sequence, read N- to C-terminus: Ribosomal RNA small subunit methyltransferase G (205 aa).

Residues Gly76, Leu81, 127 to 128 (IE), and Arg140 contribute to the S-adenosyl-L-methionine site.

It belongs to the methyltransferase superfamily. RNA methyltransferase RsmG family.

It localises to the cytoplasm. The enzyme catalyses guanosine(527) in 16S rRNA + S-adenosyl-L-methionine = N(7)-methylguanosine(527) in 16S rRNA + S-adenosyl-L-homocysteine. In terms of biological role, specifically methylates the N7 position of guanine in position 527 of 16S rRNA. The protein is Ribosomal RNA small subunit methyltransferase G of Francisella tularensis subsp. novicida (strain U112).